Consider the following 136-residue polypeptide: Ig kappa chain V-V region MOPC 21 (136 aa).

The signal sequence occupies residues 1–29; that stretch reads MHQTSMGIKMESHTLVFISILLCLYGADG. Positions 30–52 are framework-1; sequence NIVMTQSPKSMSMSVGERVTLTC. A complementarity-determining-1 region spans residues 53–63; it reads KASENVVTYVS. The tract at residues 64 to 78 is framework-2; that stretch reads WYQQKPEQSPKLLIY. The complementarity-determining-2 stretch occupies residues 79-85; sequence GASNRYT. Positions 86–117 are framework-3; sequence GVPDRFTGSGSATDFTLTISSVQAEDLADYHC. The interval 118–126 is complementarity-determining-3; it reads GQGYSYPYT. A framework-4 region spans residues 127–136; the sequence is FGGGTKLEIK.

The chain is Ig kappa chain V-V region MOPC 21 from Mus musculus (Mouse).